The following is a 360-amino-acid chain: DNA replication and repair protein RecF (360 aa).

Residue 30-37 (GRNAQGKT) participates in ATP binding.

This sequence belongs to the RecF family.

Its subcellular location is the cytoplasm. Its function is as follows. The RecF protein is involved in DNA metabolism; it is required for DNA replication and normal SOS inducibility. RecF binds preferentially to single-stranded, linear DNA. It also seems to bind ATP. In Desulforudis audaxviator (strain MP104C), this protein is DNA replication and repair protein RecF.